The following is a 57-amino-acid chain: Large ribosomal subunit protein bL32c (57 aa).

It belongs to the bacterial ribosomal protein bL32 family.

It is found in the plastid. The protein localises to the chloroplast. In Nandina domestica (Heavenly bamboo), this protein is Large ribosomal subunit protein bL32c.